Here is a 1007-residue protein sequence, read N- to C-terminus: Aldehyde reductase lnbA (1007 aa).

An adenylation (A) domain region spans residues 35–428 (QVRQSPSSIA…GRVDHQIKVR (394 aa)). One can recognise a Carrier domain in the interval 540–617 (TLCQDTQTVL…ALASIIDHAK (78 aa)). Ser577 carries the O-(pantetheine 4'-phosphoryl)serine modification. A short-chain dehydrogenase/reductase (R) domain region spans residues 659–998 (IFITGATGFV…PTLDCSLLKK (340 aa)).

It belongs to the NRP synthetase family.

The enzyme catalyses L-tyrosinal + AMP + diphosphate + NADP(+) = L-tyrosine + ATP + NADPH + H(+). Its pathway is secondary metabolite biosynthesis. In terms of biological role, non-canonical nonribosomal peptide synthetase; part of the lnb gene cluster that mediates the biosynthesis of diastereomeric piperazines. Lna and lnb clusters encode sets of enzymes that produce overlapping sets of previously undescribed metabolites such as piperazinomycin-like metabolites or morpholine. The lna and lnb biosynthetic pathways appear to be part of a signaling network that controls the formation of sclerotia, a resilient overwintering structure. One primary function of the non-canonical nonribosomal peptide synthetases lnaA and lnbA consists in the reduction of L-tyrosine. The presence in the clusters of tailoring enzymes such as the oxidoreductases lnaB, lnbB, lnaE or lnbE, as well as of the cytochrome P450 monooxygenases lnaC, lnaD, or lnbC, might explain formation of various diastereomeric piperazines. This Aspergillus flavus (strain ATCC 200026 / FGSC A1120 / IAM 13836 / NRRL 3357 / JCM 12722 / SRRC 167) protein is Aldehyde reductase lnbA.